The chain runs to 90 residues: Small ribosomal subunit protein uS15c (90 aa).

This sequence belongs to the universal ribosomal protein uS15 family. As to quaternary structure, part of the 30S ribosomal subunit.

It localises to the plastid. It is found in the chloroplast. In Drimys granadensis, this protein is Small ribosomal subunit protein uS15c (rps15).